Consider the following 370-residue polypeptide: MSKTPVPTEYDDTRILGYDPLVPPALLQHEIKASAESLDVVIKGRYDSAQILKGNDDRCIVIVGPCSIHDPPQALEYGKRLKKLADELKDDLVIIMRAYLEKPRTTVGWKGLINDPDVDNSFDINRGLKISRQLYSDLTSVVGLPIGSEMLDTISPQYFSDFLSFGAIGARTTESQLHRELASGLSFPIGFKNGTDGGLAVALDAVQASSKGHHFMGVTKNGMAAITTTKGNDCCFIILRGGKKITNYDVESVKAAKEAIAKCTDPSIKLMVDCSHDNSRKDYRNQPQVLDSVAEQISNGEDSIIGVMIESNIHEGKQPMPPAGSGKEALKYGVSITDGCVSWETTVEMLTKLSQAVQTRRSLKKQKVSN.

It belongs to the class-I DAHP synthase family.

It catalyses the reaction D-erythrose 4-phosphate + phosphoenolpyruvate + H2O = 7-phospho-2-dehydro-3-deoxy-D-arabino-heptonate + phosphate. It functions in the pathway metabolic intermediate biosynthesis; chorismate biosynthesis; chorismate from D-erythrose 4-phosphate and phosphoenolpyruvate: step 1/7. With respect to regulation, inhibited by tyrosine. Stereospecific condensation of phosphoenolpyruvate (PEP) and D-erythrose-4-phosphate (E4P) giving rise to 3-deoxy-D-arabino-heptulosonate-7-phosphate (DAHP). In Candida albicans (strain SC5314 / ATCC MYA-2876) (Yeast), this protein is Phospho-2-dehydro-3-deoxyheptonate aldolase, tyrosine-inhibited (ARO4).